We begin with the raw amino-acid sequence, 85 residues long: Small ribosomal subunit protein uS17 (85 aa).

The protein belongs to the universal ribosomal protein uS17 family. As to quaternary structure, part of the 30S ribosomal subunit.

Its function is as follows. One of the primary rRNA binding proteins, it binds specifically to the 5'-end of 16S ribosomal RNA. The protein is Small ribosomal subunit protein uS17 of Acetivibrio thermocellus (strain ATCC 27405 / DSM 1237 / JCM 9322 / NBRC 103400 / NCIMB 10682 / NRRL B-4536 / VPI 7372) (Clostridium thermocellum).